A 393-amino-acid polypeptide reads, in one-letter code: Cysteine protease ATG4B (393 aa).

C73 serves as the catalytic Nucleophile. Active-site residues include D278 and H280. Positions 388-391 (FEIL) match the LIR motif.

It belongs to the peptidase C54 family.

It is found in the cytoplasm. The protein localises to the cytosol. The protein resides in the cytoplasmic vesicle. Its subcellular location is the autophagosome. It localises to the endoplasmic reticulum. It is found in the mitochondrion. It carries out the reaction [protein]-C-terminal L-amino acid-glycyl-phosphatidylethanolamide + H2O = [protein]-C-terminal L-amino acid-glycine + a 1,2-diacyl-sn-glycero-3-phosphoethanolamine. The enzyme catalyses [protein]-C-terminal L-amino acid-glycyl-phosphatidylserine + H2O = [protein]-C-terminal L-amino acid-glycine + a 1,2-diacyl-sn-glycero-3-phospho-L-serine. Cysteine protease that plays a key role in autophagy by mediating both proteolytic activation and delipidation of ATG8 family proteins. Required for canonical autophagy (macroautophagy), non-canonical autophagy as well as for mitophagy. The protease activity is required for proteolytic activation of ATG8 family proteins: cleaves the C-terminal amino acid of ATG8 proteins to reveal a C-terminal glycine. Exposure of the glycine at the C-terminus is essential for ATG8 proteins conjugation to phosphatidylethanolamine (PE) and insertion to membranes, which is necessary for autophagy. Protease activity is also required to counteract formation of high-molecular weight conjugates of ATG8 proteins (ATG8ylation): acts as a deubiquitinating-like enzyme that removes ATG8 conjugated to other proteins, such as ATG3. In addition to the protease activity, also mediates delipidation of ATG8 family proteins. Catalyzes delipidation of PE-conjugated forms of ATG8 proteins during macroautophagy. Also involved in non-canonical autophagy, a parallel pathway involving conjugation of ATG8 proteins to single membranes at endolysosomal compartments, by catalyzing delipidation of ATG8 proteins conjugated to phosphatidylserine (PS). The sequence is that of Cysteine protease ATG4B from Gallus gallus (Chicken).